A 479-amino-acid polypeptide reads, in one-letter code: Glutamate--tRNA ligase (479 aa).

Positions 21–31 match the 'HIGH' region motif; it reads PSPTGYLHVGG. Residues 248 to 252 carry the 'KMSKS' region motif; the sequence is KLSKR. Lys-251 provides a ligand contact to ATP.

The protein belongs to the class-I aminoacyl-tRNA synthetase family. Glutamate--tRNA ligase type 1 subfamily. As to quaternary structure, monomer.

The protein localises to the cytoplasm. It carries out the reaction tRNA(Glu) + L-glutamate + ATP = L-glutamyl-tRNA(Glu) + AMP + diphosphate. In terms of biological role, catalyzes the attachment of glutamate to tRNA(Glu) in a two-step reaction: glutamate is first activated by ATP to form Glu-AMP and then transferred to the acceptor end of tRNA(Glu). This is Glutamate--tRNA ligase from Actinobacillus pleuropneumoniae serotype 5b (strain L20).